Here is a 573-residue protein sequence, read N- to C-terminus: 3-oxosteroid 1-dehydrogenase (573 aa).

7 to 36 (DLIVVGSGAGACWAPIRAQEQGLKTLVVEK) contacts FAD.

Belongs to the FAD-dependent oxidoreductase 2 family. 3-oxosteroid dehydrogenase subfamily. It depends on FAD as a cofactor.

It is found in the cell inner membrane. It catalyses the reaction a 3-oxosteroid + A = a 3-oxo-Delta(1)-steroid + AH2. It participates in lipid metabolism; steroid degradation. Dehydrogenates steroids by introducing a double bond in steroid ring A. This Comamonas testosteroni (Pseudomonas testosteroni) protein is 3-oxosteroid 1-dehydrogenase.